We begin with the raw amino-acid sequence, 509 residues long: ATP synthase subunit alpha (509 aa).

171–178 serves as a coordination point for ATP; the sequence is GDRKTGKT.

This sequence belongs to the ATPase alpha/beta chains family. As to quaternary structure, F-type ATPases have 2 components, CF(1) - the catalytic core - and CF(0) - the membrane proton channel. CF(1) has five subunits: alpha(3), beta(3), gamma(1), delta(1), epsilon(1). CF(0) has three main subunits: a(1), b(2) and c(9-12). The alpha and beta chains form an alternating ring which encloses part of the gamma chain. CF(1) is attached to CF(0) by a central stalk formed by the gamma and epsilon chains, while a peripheral stalk is formed by the delta and b chains.

It localises to the cell inner membrane. The enzyme catalyses ATP + H2O + 4 H(+)(in) = ADP + phosphate + 5 H(+)(out). Produces ATP from ADP in the presence of a proton gradient across the membrane. The alpha chain is a regulatory subunit. This is ATP synthase subunit alpha from Ehrlichia chaffeensis (strain ATCC CRL-10679 / Arkansas).